The following is a 170-amino-acid chain: MSTEGAKPSEMLIAACRSNNVDMLEEVVHQQEGDGVSFINNARDSLGNDCVHVCTKYGSLECLDWLLDISGVNLNNRCRMTGDTPLHFAVMFIKKDQETALRMVEMLMEVGADPLLTNNDGFRPIDLVPGDFHDVFASALEGPAPALQYSADVVADDDDEEEGSGESDEE.

ANK repeat units lie at residues 46 to 76 (LGND…NLNN) and 81 to 116 (TGDT…DPLL). Residues 150 to 170 (SADVVADDDDEEEGSGESDEE) are disordered. The segment covering 154–170 (VADDDDEEEGSGESDEE) has biased composition (acidic residues).

The protein resides in the cytoplasm. Its subcellular location is the nucleus. This Schizosaccharomyces pombe (strain 972 / ATCC 24843) (Fission yeast) protein is Ankyrin repeat-containing protein C105.02c.